The chain runs to 276 residues: Putative pyruvate, phosphate dikinase regulatory protein (276 aa).

ADP is bound at residue 153–160 (GISRTSKT).

It belongs to the pyruvate, phosphate/water dikinase regulatory protein family. PDRP subfamily.

It catalyses the reaction N(tele)-phospho-L-histidyl/L-threonyl-[pyruvate, phosphate dikinase] + ADP = N(tele)-phospho-L-histidyl/O-phospho-L-threonyl-[pyruvate, phosphate dikinase] + AMP + H(+). The enzyme catalyses N(tele)-phospho-L-histidyl/O-phospho-L-threonyl-[pyruvate, phosphate dikinase] + phosphate + H(+) = N(tele)-phospho-L-histidyl/L-threonyl-[pyruvate, phosphate dikinase] + diphosphate. Functionally, bifunctional serine/threonine kinase and phosphorylase involved in the regulation of the pyruvate, phosphate dikinase (PPDK) by catalyzing its phosphorylation/dephosphorylation. This Brucella anthropi (strain ATCC 49188 / DSM 6882 / CCUG 24695 / JCM 21032 / LMG 3331 / NBRC 15819 / NCTC 12168 / Alc 37) (Ochrobactrum anthropi) protein is Putative pyruvate, phosphate dikinase regulatory protein.